We begin with the raw amino-acid sequence, 240 residues long: 2-C-methyl-D-erythritol 4-phosphate cytidylyltransferase (240 aa).

The protein belongs to the IspD/TarI cytidylyltransferase family. IspD subfamily.

It carries out the reaction 2-C-methyl-D-erythritol 4-phosphate + CTP + H(+) = 4-CDP-2-C-methyl-D-erythritol + diphosphate. The protein operates within isoprenoid biosynthesis; isopentenyl diphosphate biosynthesis via DXP pathway; isopentenyl diphosphate from 1-deoxy-D-xylulose 5-phosphate: step 2/6. In terms of biological role, catalyzes the formation of 4-diphosphocytidyl-2-C-methyl-D-erythritol from CTP and 2-C-methyl-D-erythritol 4-phosphate (MEP). In Chlorobium luteolum (strain DSM 273 / BCRC 81028 / 2530) (Pelodictyon luteolum), this protein is 2-C-methyl-D-erythritol 4-phosphate cytidylyltransferase.